Consider the following 250-residue polypeptide: 1-(5-phosphoribosyl)-5-[(5-phosphoribosylamino)methylideneamino] imidazole-4-carboxamide isomerase (250 aa).

Asp-12 serves as the catalytic Proton acceptor. Residue Asp-134 is the Proton donor of the active site.

Belongs to the HisA/HisF family.

The protein resides in the cytoplasm. The enzyme catalyses 1-(5-phospho-beta-D-ribosyl)-5-[(5-phospho-beta-D-ribosylamino)methylideneamino]imidazole-4-carboxamide = 5-[(5-phospho-1-deoxy-D-ribulos-1-ylimino)methylamino]-1-(5-phospho-beta-D-ribosyl)imidazole-4-carboxamide. It participates in amino-acid biosynthesis; L-histidine biosynthesis; L-histidine from 5-phospho-alpha-D-ribose 1-diphosphate: step 4/9. The chain is 1-(5-phosphoribosyl)-5-[(5-phosphoribosylamino)methylideneamino] imidazole-4-carboxamide isomerase from Actinobacillus pleuropneumoniae serotype 7 (strain AP76).